Here is a 663-residue protein sequence, read N- to C-terminus: UvrABC system protein B (663 aa).

Residues 1–10 show a composition bias toward basic and acidic residues; the sequence is MIDKRDDKPF. A disordered region spans residues 1-23; sequence MIDKRDDKPFKLKSKYKPSGDQP. One can recognise a Helicase ATP-binding domain in the interval 31–418; the sequence is DNIEGGEKAQ…TNTIIEQIIR (388 aa). Residue 44-51 coordinates ATP; that stretch reads GATGTGKT. The Beta-hairpin signature appears at 97–120; the sequence is YYDYYQPEAYVPSSDTYIEKDSSV. A Helicase C-terminal domain is found at 435 to 601; sequence QMDDLLGEIN…TIKKDIRGLI (167 aa). Residues 627 to 662 enclose the UVR domain; it reads KEAINALQKQMQEAAELLDFELAAQMRDLILELKLM.

This sequence belongs to the UvrB family. Forms a heterotetramer with UvrA during the search for lesions. Interacts with UvrC in an incision complex.

The protein localises to the cytoplasm. The UvrABC repair system catalyzes the recognition and processing of DNA lesions. A damage recognition complex composed of 2 UvrA and 2 UvrB subunits scans DNA for abnormalities. Upon binding of the UvrA(2)B(2) complex to a putative damaged site, the DNA wraps around one UvrB monomer. DNA wrap is dependent on ATP binding by UvrB and probably causes local melting of the DNA helix, facilitating insertion of UvrB beta-hairpin between the DNA strands. Then UvrB probes one DNA strand for the presence of a lesion. If a lesion is found the UvrA subunits dissociate and the UvrB-DNA preincision complex is formed. This complex is subsequently bound by UvrC and the second UvrB is released. If no lesion is found, the DNA wraps around the other UvrB subunit that will check the other stand for damage. This is UvrABC system protein B from Streptococcus pyogenes serotype M1.